Here is a 426-residue protein sequence, read N- to C-terminus: Histidine--tRNA ligase (426 aa).

This sequence belongs to the class-II aminoacyl-tRNA synthetase family. Homodimer.

It is found in the cytoplasm. The enzyme catalyses tRNA(His) + L-histidine + ATP = L-histidyl-tRNA(His) + AMP + diphosphate + H(+). This chain is Histidine--tRNA ligase, found in Microcystis aeruginosa (strain NIES-843 / IAM M-2473).